Here is a 147-residue protein sequence, read N- to C-terminus: Endoribonuclease YbeY (147 aa).

The Zn(2+) site is built by H108, H112, and H118.

It belongs to the endoribonuclease YbeY family. The cofactor is Zn(2+).

It is found in the cytoplasm. Single strand-specific metallo-endoribonuclease involved in late-stage 70S ribosome quality control and in maturation of the 3' terminus of the 16S rRNA. In Sulfurovum sp. (strain NBC37-1), this protein is Endoribonuclease YbeY.